Here is a 610-residue protein sequence, read N- to C-terminus: UvrABC system protein C (610 aa).

The GIY-YIG domain maps to 16–94 (HQPGVYRMYN…IKQYLPKYNV (79 aa)). In terms of domain architecture, UVR spans 204–239 (QQVLKQLIEKMEVASQQLRFEDAAKFRDQIQAIRRV).

Belongs to the UvrC family. In terms of assembly, interacts with UvrB in an incision complex.

It localises to the cytoplasm. Its function is as follows. The UvrABC repair system catalyzes the recognition and processing of DNA lesions. UvrC both incises the 5' and 3' sides of the lesion. The N-terminal half is responsible for the 3' incision and the C-terminal half is responsible for the 5' incision. This chain is UvrABC system protein C, found in Vibrio parahaemolyticus serotype O3:K6 (strain RIMD 2210633).